The chain runs to 255 residues: Propionicin-F (255 aa).

2 propeptides span residues 1-101 and 145-255; these read MNTK…RVSC and GTPT…DETV.

The protein localises to the secreted. In terms of biological role, bacteriocin with specific antibacterial activity against strains of P.freudenreichii. No antibacterial activity was detected against P.acidipropionici, P.jensenii and P.thoenii. This Propionibacterium freudenreichii subsp. freudenreichii protein is Propionicin-F.